Consider the following 339-residue polypeptide: Ketol-acid reductoisomerase (NADP(+)) (339 aa).

Residues M1–T182 enclose the KARI N-terminal Rossmann domain. NADP(+) contacts are provided by residues Y24–Q27, R48, S51, T53, and D83–Q86. The active site involves H108. G134 provides a ligand contact to NADP(+). The KARI C-terminal knotted domain occupies T183–I328. Residues D191, E195, E227, and E231 each coordinate Mg(2+). Residue S252 participates in substrate binding.

This sequence belongs to the ketol-acid reductoisomerase family. The cofactor is Mg(2+).

The catalysed reaction is (2R)-2,3-dihydroxy-3-methylbutanoate + NADP(+) = (2S)-2-acetolactate + NADPH + H(+). It carries out the reaction (2R,3R)-2,3-dihydroxy-3-methylpentanoate + NADP(+) = (S)-2-ethyl-2-hydroxy-3-oxobutanoate + NADPH + H(+). It functions in the pathway amino-acid biosynthesis; L-isoleucine biosynthesis; L-isoleucine from 2-oxobutanoate: step 2/4. Its pathway is amino-acid biosynthesis; L-valine biosynthesis; L-valine from pyruvate: step 2/4. Its function is as follows. Involved in the biosynthesis of branched-chain amino acids (BCAA). Catalyzes an alkyl-migration followed by a ketol-acid reduction of (S)-2-acetolactate (S2AL) to yield (R)-2,3-dihydroxy-isovalerate. In the isomerase reaction, S2AL is rearranged via a Mg-dependent methyl migration to produce 3-hydroxy-3-methyl-2-ketobutyrate (HMKB). In the reductase reaction, this 2-ketoacid undergoes a metal-dependent reduction by NADPH to yield (R)-2,3-dihydroxy-isovalerate. The protein is Ketol-acid reductoisomerase (NADP(+)) of Brucella anthropi (strain ATCC 49188 / DSM 6882 / CCUG 24695 / JCM 21032 / LMG 3331 / NBRC 15819 / NCTC 12168 / Alc 37) (Ochrobactrum anthropi).